Reading from the N-terminus, the 2145-residue chain is Glutamate synthase [NADH] (2145 aa).

A propeptide spanning residues 1 to 53 (MPVLKSDNFDPLEEAYEGGTIQNYNDEHHLHKSWANVIPDKRGLYDPDYEHDA) is cleaved from the precursor. Catalysis depends on Cys-54, which acts as the For GATase activity. The Glutamine amidotransferase type-2 domain occupies 54–455 (CGVGFVANKH…PGDLFLVDTQ (402 aa)). 1132–1189 (LAETHQTLVLNDLRRNVVVQTDGQLRTGFDIAVAVLLGAESFTLATVPLIAMGCVMLR) is an FMN binding site. [3Fe-4S] cluster contacts are provided by Cys-1185, Cys-1191, and Cys-1196. Residues 1551–1600 (KKVLLKEKAEAAKAKAKATSEYLKKFRSNQEVDDEVNTLLIANQKAKEQE) are a coiled coil. 1928–1942 (GGGDTGNDCLGTSVR) lines the NAD(+) pocket. At Thr-2070 the chain carries Phosphothreonine.

This sequence belongs to the glutamate synthase family. Homotrimer. [3Fe-4S] cluster is required as a cofactor. It depends on FAD as a cofactor. The cofactor is FMN.

The enzyme catalyses 2 L-glutamate + NAD(+) = L-glutamine + 2-oxoglutarate + NADH + H(+). The protein operates within amino-acid biosynthesis; L-glutamate biosynthesis via GLT pathway; L-glutamate from 2-oxoglutarate and L-glutamine (NAD(+) route): step 1/1. It functions in the pathway energy metabolism; nitrogen metabolism. Its activity is regulated as follows. Inhibited by homocysteine sulfonamide. Functionally, forms L-glutamate from L-glutamine and 2-oxoglutarate. Represents an alternative pathway to L-glutamate dehydrogenase for the biosynthesis of L-glutamate. Participates with glutamine synthetase in ammonia assimilation processes. The enzyme is specific for NADH, L-glutamine and 2-oxoglutarate. The sequence is that of Glutamate synthase [NADH] (GLT1) from Saccharomyces cerevisiae (strain ATCC 204508 / S288c) (Baker's yeast).